A 428-amino-acid chain; its full sequence is Histidinol dehydrogenase (428 aa).

Substrate contacts are provided by serine 232, glutamine 254, and histidine 257. Residues glutamine 254 and histidine 257 each coordinate Zn(2+). Catalysis depends on proton acceptor residues glutamate 324 and histidine 325. Positions 325, 358, 412, and 417 each coordinate substrate. Zn(2+) is bound at residue aspartate 358. Residue histidine 417 participates in Zn(2+) binding.

The protein belongs to the histidinol dehydrogenase family. Zn(2+) is required as a cofactor.

The catalysed reaction is L-histidinol + 2 NAD(+) + H2O = L-histidine + 2 NADH + 3 H(+). It functions in the pathway amino-acid biosynthesis; L-histidine biosynthesis; L-histidine from 5-phospho-alpha-D-ribose 1-diphosphate: step 9/9. In terms of biological role, catalyzes the sequential NAD-dependent oxidations of L-histidinol to L-histidinaldehyde and then to L-histidine. In Thermotoga maritima (strain ATCC 43589 / DSM 3109 / JCM 10099 / NBRC 100826 / MSB8), this protein is Histidinol dehydrogenase.